Consider the following 635-residue polypeptide: Probable retaining alpha-galactosidase (635 aa).

The signal sequence occupies residues 1–30 (MARSVRRTTLALLLSAVLAMTLFVTAPAHA). Residue aspartate 179 coordinates Ca(2+). The Nucleophile role is filled by aspartate 397. The Ca(2+) site is built by glutamate 446 and glutamate 452. The Proton donor/acceptor role is filled by glutamate 452.

The protein belongs to the glycosyl hydrolase 97 family. It depends on Ca(2+) as a cofactor.

The catalysed reaction is Hydrolysis of terminal, non-reducing alpha-D-galactose residues in alpha-D-galactosides, including galactose oligosaccharides, galactomannans and galactolipids.. The polypeptide is Probable retaining alpha-galactosidase (Streptomyces bingchenggensis (strain BCW-1)).